The following is a 239-amino-acid chain: Ribosomal RNA small subunit methyltransferase G (239 aa).

S-adenosyl-L-methionine contacts are provided by residues G78, F83, 129-130 (AE), and R148.

It belongs to the methyltransferase superfamily. RNA methyltransferase RsmG family.

The protein localises to the cytoplasm. Specifically methylates the N7 position of a guanine in 16S rRNA. The sequence is that of Ribosomal RNA small subunit methyltransferase G from Clostridium perfringens (strain 13 / Type A).